A 541-amino-acid chain; its full sequence is Nectin 1b (541 aa).

A signal peptide spans 1–21 (MDKQESFFVGHKSHRCSQNRS). Over 22-396 (VSQIHQRTSR…PAELHSSGAA (375 aa)) the chain is Extracellular. Asn51, Asn105, Asn180, Asn242, Asn326, Asn337, and Asn372 each carry an N-linked (GlcNAc...) asparagine glycan. An Ig-like V-type domain is found at 77 to 182 (GDTVELKCLF…GNRENMVNLT (106 aa)). Cys84 and Cys165 are disulfide-bonded. Ig-like C2-type domains follow at residues 187–282 (PVTK…VILN) and 287–374 (PEVK…VNVT). Disulfide bonds link Cys212/Cys266 and Cys309/Cys356. A helical membrane pass occupies residues 397-417 (IGGAVGGVALLVAAIALLVFF). Residues 418–541 (LRRRQRTFKG…SVISKKEWYV (124 aa)) are Cytoplasmic-facing. Residues 440 to 507 (YSKAGGMPAH…VDEGESRDYD (68 aa)) are disordered. Over residues 479-493 (SGDRDFDGNSEDLKR) the composition is skewed to basic and acidic residues.

Belongs to the nectin family. As to quaternary structure, cis- and trans-homodimer. Can form trans-heterodimers. In terms of tissue distribution, expressed in the developing eye and nervous system.

Its subcellular location is the cell membrane. The protein localises to the cell junction. It is found in the adherens junction. In terms of biological role, cell adhesion molecule that promotes cell-cell contacts and plays important roles in the development of the nervous system. Acts by forming homophilic or heterophilic trans-dimers. This Danio rerio (Zebrafish) protein is Nectin 1b.